Reading from the N-terminus, the 723-residue chain is Fatty acid oxidation complex subunit alpha (723 aa).

Residues 1 to 189 (MIYQAETLQV…KIGLLDAVVD (189 aa)) form an enoyl-CoA hydratase/isomerase region. Aspartate 296 contributes to the substrate binding site. The tract at residues 311–723 (SKDTQRAAVL…FYGAQQQGSI (413 aa)) is 3-hydroxyacyl-CoA dehydrogenase. Residues methionine 325, aspartate 344, 401–403 (VVE), lysine 408, and serine 430 contribute to the NAD(+) site. Histidine 451 functions as the For 3-hydroxyacyl-CoA dehydrogenase activity in the catalytic mechanism. Asparagine 454 is an NAD(+) binding site. Residues asparagine 501 and tyrosine 661 each coordinate substrate.

The protein in the N-terminal section; belongs to the enoyl-CoA hydratase/isomerase family. In the C-terminal section; belongs to the 3-hydroxyacyl-CoA dehydrogenase family. As to quaternary structure, heterotetramer of two alpha chains (FadB) and two beta chains (FadA).

It catalyses the reaction a (3S)-3-hydroxyacyl-CoA + NAD(+) = a 3-oxoacyl-CoA + NADH + H(+). The catalysed reaction is a (3S)-3-hydroxyacyl-CoA = a (2E)-enoyl-CoA + H2O. It carries out the reaction a 4-saturated-(3S)-3-hydroxyacyl-CoA = a (3E)-enoyl-CoA + H2O. The enzyme catalyses (3S)-3-hydroxybutanoyl-CoA = (3R)-3-hydroxybutanoyl-CoA. It catalyses the reaction a (3Z)-enoyl-CoA = a 4-saturated (2E)-enoyl-CoA. The catalysed reaction is a (3E)-enoyl-CoA = a 4-saturated (2E)-enoyl-CoA. Its pathway is lipid metabolism; fatty acid beta-oxidation. Functionally, involved in the aerobic and anaerobic degradation of long-chain fatty acids via beta-oxidation cycle. Catalyzes the formation of 3-oxoacyl-CoA from enoyl-CoA via L-3-hydroxyacyl-CoA. It can also use D-3-hydroxyacyl-CoA and cis-3-enoyl-CoA as substrate. In Vibrio campbellii (strain ATCC BAA-1116), this protein is Fatty acid oxidation complex subunit alpha.